Here is a 60-residue protein sequence, read N- to C-terminus: Large ribosomal subunit protein bL32 (60 aa).

Residues 1–60 (MAVQQNKKTPSKRGMHRSHDFLVAPQLSVEQTTGETHMRHHISPNGFYRGRKVLKTKNDE) are disordered. A compositionally biased stretch (basic residues) spans 49–60 (RGRKVLKTKNDE).

Belongs to the bacterial ribosomal protein bL32 family.

The protein is Large ribosomal subunit protein bL32 of Herminiimonas arsenicoxydans.